The primary structure comprises 157 residues: D-aminoacyl-tRNA deacylase (157 aa).

A Gly-cisPro motif, important for rejection of L-amino acids motif is present at residues 137-138 (GP).

Belongs to the DTD family. Homodimer.

Its subcellular location is the cytoplasm. The enzyme catalyses glycyl-tRNA(Ala) + H2O = tRNA(Ala) + glycine + H(+). It carries out the reaction a D-aminoacyl-tRNA + H2O = a tRNA + a D-alpha-amino acid + H(+). In terms of biological role, an aminoacyl-tRNA editing enzyme that deacylates mischarged D-aminoacyl-tRNAs. Also deacylates mischarged glycyl-tRNA(Ala), protecting cells against glycine mischarging by AlaRS. Acts via tRNA-based rather than protein-based catalysis; rejects L-amino acids rather than detecting D-amino acids in the active site. By recycling D-aminoacyl-tRNA to D-amino acids and free tRNA molecules, this enzyme counteracts the toxicity associated with the formation of D-aminoacyl-tRNA entities in vivo and helps enforce protein L-homochirality. The sequence is that of D-aminoacyl-tRNA deacylase from Cyanothece sp. (strain PCC 7425 / ATCC 29141).